The sequence spans 458 residues: MKIFNSLTKQKEIFKPIESGKVKLYVCGMTVYDYMHIGHGRSWIIFDMVVRYLRMRGYEVTFVRNITDIDDKIIKRAGENKESPAALAERFIQILHEDEKALRVLSPDQEPRATQYVPEIIKLIQKLLDNQYAYTGQNGDVFFDVRRFKDYGKLSHRHLDELQAGARVEVSDSKRDPLDFVLWKKAKPGEPKWDSPWGEGRPGWHIECSAMSSSILGQPFDIHGGGLDLKFPHHENEIAQSEAGEEKPFVKLWMHAGLLEINKEKMSKSLGNIISIREALKESDVEVLRYFLLSGHYRNPLSYSKENLENGRLALERFYLALRGLPVVNHEKTSSYTDRFYEAMDDDFNTPIAFALLFEMVREINRFRDNNQIEKAAVLAAELKCLGNIFGLLQYSPEQFLQGAKKEADVQEIKKLIDQRNEARAKKDWKTADQIRDQLTDLGVAIEDSSDGTSWRQE.

Cys27 contacts Zn(2+). A 'HIGH' region motif is present at residues 29 to 39 (MTVYDYMHIGH). Zn(2+) contacts are provided by Cys208, His233, and Glu237. Positions 265 to 269 (KMSKS) match the 'KMSKS' region motif. Residue Lys268 coordinates ATP.

Belongs to the class-I aminoacyl-tRNA synthetase family. Monomer. Zn(2+) serves as cofactor.

It is found in the cytoplasm. It catalyses the reaction tRNA(Cys) + L-cysteine + ATP = L-cysteinyl-tRNA(Cys) + AMP + diphosphate. The chain is Cysteine--tRNA ligase from Coxiella burnetii (strain Dugway 5J108-111).